The following is a 670-amino-acid chain: DNA ligase (670 aa).

Residues 34–38 (DAEYD), 84–85 (SL), 116–119 (EHKV), Arg139, Glu174, Tyr226, Lys291, and Lys315 contribute to the NAD(+) site. Lys118 serves as the catalytic N6-AMP-lysine intermediate. Zn(2+) contacts are provided by Cys409, Cys412, Cys425, and Cys430. A BRCT domain is found at 586–670 (EVSDLLSGLT…LKEKGAPVPA (85 aa)).

Belongs to the NAD-dependent DNA ligase family. LigA subfamily. It depends on Mg(2+) as a cofactor.

The enzyme catalyses NAD(+) + (deoxyribonucleotide)n-3'-hydroxyl + 5'-phospho-(deoxyribonucleotide)m = (deoxyribonucleotide)n+m + AMP + beta-nicotinamide D-nucleotide.. DNA ligase that catalyzes the formation of phosphodiester linkages between 5'-phosphoryl and 3'-hydroxyl groups in double-stranded DNA using NAD as a coenzyme and as the energy source for the reaction. It is essential for DNA replication and repair of damaged DNA. This is DNA ligase from Thermus filiformis.